Reading from the N-terminus, the 204-residue chain is Tetraspanin-13 (204 aa).

At 1 to 19 (MVCGGFACSKNCLCALNLL) the chain is on the cytoplasmic side. Residues 20–40 (YTLVSLLLIGIAAWGIGFGLI) traverse the membrane as a helical segment. The Extracellular portion of the chain corresponds to 41–44 (SSLR). Residues 45–65 (VVGVVIAVGIFLFLIALVGLI) form a helical membrane-spanning segment. Residues 66 to 72 (GAVKHHQ) are Cytoplasmic-facing. A helical transmembrane segment spans residues 73-93 (VLLFFYMIILLLVFIVQFSVS). The Extracellular segment spans residues 94 to 167 (CACLALNQEQ…IGRYAGEVLR (74 aa)). N-linked (GlcNAc...) asparagine glycans are attached at residues Asn-113 and Asn-137. Ser-143 bears the Phosphoserine mark. Residues 168–188 (FVGGIGLFFSFTEILGVWLTY) traverse the membrane as a helical segment. At 189–204 (RYRNQKDPRANPSAFL) the chain is on the cytoplasmic side.

Belongs to the tetraspanin (TM4SF) family.

The protein localises to the membrane. This chain is Tetraspanin-13 (TSPAN13), found in Bos taurus (Bovine).